The chain runs to 2801 residues: Neurobeachin-like protein 2 (2801 aa).

A disordered region spans residues 1379–1529; that stretch reads RHEEEYEEEE…TISNTSNPQA (151 aa). The segment covering 1383 to 1393 has biased composition (acidic residues); sequence EYEEEEGETQD. Composition is skewed to polar residues over residues 1400–1413, 1424–1437, 1470–1481, and 1500–1528; these read DLSQ…QLKN, GDQS…SNTV, KGPQTPVGSQPE, and SSSL…SNPQ. Residues 1986 to 2086 enclose the BEACH-type PH domain; it reads SQKEKLVLSE…VRNKVYSRIL (101 aa). The BEACH domain maps to 2099–2391; the sequence is RSPQELLKAS…QLLKEPHPPR (293 aa). WD repeat units follow at residues 2431 to 2468, 2492 to 2535, 2538 to 2575, 2588 to 2626, 2633 to 2676, 2684 to 2719, and 2727 to 2762; these read LVQA…SWLP, RFLS…MLGK, LVGR…VWQV, RPIQ…VHSV, WTLR…RYAL, TLLA…IRDL, and APLA…VGAG.

The protein belongs to the WD repeat neurobeachin family.

It localises to the endoplasmic reticulum. Involved in thrombopoiesis. Plays a role in the development or secretion of alpha-granules, that contain several growth factors important for platelet biogenesis. This Danio rerio (Zebrafish) protein is Neurobeachin-like protein 2 (nbeal2).